Consider the following 330-residue polypeptide: uncharacterized protein (330 aa).

One can recognise an ABC transporter domain in the interval 4-242; it reads LTISDLVVEY…AGEVLFEQST (239 aa). Residue 40-47 participates in ATP binding; it reads GPSGCGKT. Position 210 to 330 (210 to 330) interacts with a nucleoside 3',5'-cyclic phosphate; sequence DRVLELMPAQ…LIEHRELASE (121 aa).

It belongs to the ABC transporter superfamily.

This is an uncharacterized protein from Mycobacterium bovis (strain ATCC BAA-935 / AF2122/97).